The chain runs to 191 residues: Ribonuclease HII (191 aa).

The RNase H type-2 domain occupies 7–191 (ILMAGVDEVG…YSPVADLISK (185 aa)). Residues Asp13, Glu14, and Asp103 each contribute to the a divalent metal cation site.

The protein belongs to the RNase HII family. It depends on Mn(2+) as a cofactor. The cofactor is Mg(2+).

The protein localises to the cytoplasm. It carries out the reaction Endonucleolytic cleavage to 5'-phosphomonoester.. In terms of biological role, endonuclease that specifically degrades the RNA of RNA-DNA hybrids. The protein is Ribonuclease HII of Legionella pneumophila subsp. pneumophila (strain Philadelphia 1 / ATCC 33152 / DSM 7513).